Reading from the N-terminus, the 90-residue chain is DNA-directed RNA polymerase subunit omega (90 aa).

The tract at residues 69-90 (RQEQQEQEAAELAAVSSIAHNR) is disordered.

The protein belongs to the RNA polymerase subunit omega family. In terms of assembly, the RNAP catalytic core consists of 2 alpha, 1 beta, 1 beta' and 1 omega subunit. When a sigma factor is associated with the core the holoenzyme is formed, which can initiate transcription.

It catalyses the reaction RNA(n) + a ribonucleoside 5'-triphosphate = RNA(n+1) + diphosphate. Functionally, promotes RNA polymerase assembly. Latches the N- and C-terminal regions of the beta' subunit thereby facilitating its interaction with the beta and alpha subunits. The sequence is that of DNA-directed RNA polymerase subunit omega from Vibrio parahaemolyticus serotype O3:K6 (strain RIMD 2210633).